The primary structure comprises 647 residues: MSKIIGIDLGTTNSCVSIMEGSQPKVLENAEGARTTPSVVAFTEDGEKLVGQPAKRQAVTNPENTIFAVKRLIGRSFEDPTVKKDIAAAPFKIVNSEKGDAWIEAKGEKYSPSQISAFILQKMKETAEKYLGQEVTKAVITVPAYFNDAQRQATKDAGKIAGLEVLRIINEPTAASLAYGLDKKQNKKIAVYDLGGGTFDVSILELGDGVFEVKSTNGDTFLGGEDFDNTIVDYLIGEFKKDSGIDLRSDKLALQRLKEAAEKAKIELSSAEQTDVNLPFITADKTGPKHINLKMTRAKLEALVEDLISRTLPPCKTALKDAGLTASEIDEIVMVGGMTRMPKVLSEVKNFFGKEPNKSVNPDEVVAMGAAIQAGVLQGDVKDVLLLDVTPLSLGIETLGGVSTKLIEKNTTIPTKKSQVFSTADDNQPAVSIRVLQGEREMASDNKMLGNFELVGIAPAPRGVPQIEVTFDIDANGIVSVSAKDKGTGKEQKIQIQASGGLSDEEIEKMVKDAEANKEEDKKKRESVDVRNQADTLLHSTEKNLKEHGAKVSDADKKAIEDASTDLKEAIKGTDTEEIKKKTETLVQASMKLGEAIYKSQEKKEGSPKEGDKNDEGKKDDNVVDADFEEVKEESKEGKEEDKEKSA.

Position 198 is a phosphothreonine; by autocatalysis (Thr198). Composition is skewed to basic and acidic residues over residues 514 to 529 (AEAN…ESVD), 540 to 557 (STEK…DADK), and 600 to 622 (SQEK…KDDN). 2 disordered regions span residues 514 to 557 (AEAN…DADK) and 596 to 647 (AIYK…EKSA). Acidic residues predominate over residues 623-632 (VVDADFEEVK). Over residues 633–647 (EESKEGKEEDKEKSA) the composition is skewed to basic and acidic residues.

The protein belongs to the heat shock protein 70 family.

In terms of biological role, acts as a chaperone. In Pelagibacter ubique (strain HTCC1062), this protein is Chaperone protein DnaK.